The primary structure comprises 322 residues: Porphobilinogen deaminase (322 aa).

C254 is subject to S-(dipyrrolylmethanemethyl)cysteine.

This sequence belongs to the HMBS family. In terms of assembly, monomer. Dipyrromethane serves as cofactor.

The catalysed reaction is 4 porphobilinogen + H2O = hydroxymethylbilane + 4 NH4(+). Its pathway is porphyrin-containing compound metabolism; protoporphyrin-IX biosynthesis; coproporphyrinogen-III from 5-aminolevulinate: step 2/4. Its function is as follows. Tetrapolymerization of the monopyrrole PBG into the hydroxymethylbilane pre-uroporphyrinogen in several discrete steps. This chain is Porphobilinogen deaminase, found in Methylococcus capsulatus (strain ATCC 33009 / NCIMB 11132 / Bath).